Consider the following 326-residue polypeptide: GDP-mannose transporter (326 aa).

Topologically, residues 1–4 (MEKS) are cytoplasmic. The chain crosses the membrane as a helical span at residues 5 to 25 (ITNSPVLSILSYCAASILMTV). The Lumenal portion of the chain corresponds to 26–35 (TNKYVLSGTS). A helical transmembrane segment spans residues 36–56 (FNLNLALLAVQSIVCLTAISI). Topologically, residues 57–74 (GKSFGLCKFRSFNADEAK) are cytoplasmic. Residues 75-97 (KWFPIALLLVVMIYTSSKALQFL) form a helical membrane-spanning segment. At 98–100 (SIP) the chain is on the lumenal side. Residues 101 to 123 (VYTIFKNLTIILIAYGEVLWFGG) form a helical membrane-spanning segment. Topologically, residues 124 to 129 (SVTSMA) are cytoplasmic. A helical membrane pass occupies residues 130 to 152 (LASFVLMVLSSVIAAWSDISGAI). Over 153–163 (AVSGSATTTVT) the chain is Lumenal. The chain crosses the membrane as a helical span at residues 164 to 184 (ALNIGYFWMMSNCFASAAFVL). The Cytoplasmic segment spans residues 185 to 208 (YMRKRIKLTNFGDFDTTFYNNLLS). A helical transmembrane segment spans residues 209-229 (IPVLLIASLLFEDWSPANLAV). Over 230–237 (NFPPESRN) the chain is Lumenal. The chain crosses the membrane as a helical span at residues 238-258 (LIFFSMVVSGLMSIGISYCSA). Residues 259–268 (WCVRVTSSTT) are Cytoplasmic-facing. A helical membrane pass occupies residues 269–289 (YSMVGALNKLPLALSGIVFFG). The Lumenal segment spans residues 290–291 (TP). The helical transmembrane segment at 292–312 (ATFSSVSAIFVGFVAGIVYAV) threads the bilayer. Residues 313 to 326 (AQIQKKKAEAALPK) are Cytoplasmic-facing.

The protein belongs to the TPT transporter family. SLC35D subfamily. Homooligomer.

It localises to the golgi apparatus membrane. The protein localises to the cytoplasmic vesicle membrane. It is found in the endoplasmic reticulum membrane. Functionally, involved in the import of GDP-mannose from the cytoplasm into the Golgi lumen. The protein is GDP-mannose transporter (VRG4) of Yarrowia lipolytica (strain CLIB 122 / E 150) (Yeast).